Consider the following 200-residue polypeptide: Holliday junction branch migration complex subunit RuvA (200 aa).

The segment at 1–63 (MIASVRGVVT…EDSLTLYGFA (63 aa)) is domain I. The domain II stretch occupies residues 64–142 (DDDAKALFEL…PVPVGADSAA (79 aa)). The tract at residues 143–151 (GVTTGAWPE) is flexible linker. The segment at 151–200 (EQVRQALVGLGWTAAQADQAVTAVAETVDGAVPPVPVLLRQAIRLLGRTR) is domain III.

The protein belongs to the RuvA family. In terms of assembly, homotetramer. Forms an RuvA(8)-RuvB(12)-Holliday junction (HJ) complex. HJ DNA is sandwiched between 2 RuvA tetramers; dsDNA enters through RuvA and exits via RuvB. An RuvB hexamer assembles on each DNA strand where it exits the tetramer. Each RuvB hexamer is contacted by two RuvA subunits (via domain III) on 2 adjacent RuvB subunits; this complex drives branch migration. In the full resolvosome a probable DNA-RuvA(4)-RuvB(12)-RuvC(2) complex forms which resolves the HJ.

The protein resides in the cytoplasm. Functionally, the RuvA-RuvB-RuvC complex processes Holliday junction (HJ) DNA during genetic recombination and DNA repair, while the RuvA-RuvB complex plays an important role in the rescue of blocked DNA replication forks via replication fork reversal (RFR). RuvA specifically binds to HJ cruciform DNA, conferring on it an open structure. The RuvB hexamer acts as an ATP-dependent pump, pulling dsDNA into and through the RuvAB complex. HJ branch migration allows RuvC to scan DNA until it finds its consensus sequence, where it cleaves and resolves the cruciform DNA. This chain is Holliday junction branch migration complex subunit RuvA, found in Salinispora tropica (strain ATCC BAA-916 / DSM 44818 / JCM 13857 / NBRC 105044 / CNB-440).